The sequence spans 299 residues: Peroxisomal biogenesis factor 19 (299 aa).

The tract at residues Met-1 to Leu-63 is disordered. Ala-2 is modified (N-acetylalanine). Residues Ala-2–Gly-56 are docking to the peroxisome membrane and binding to PEX3. Residues Ala-2 to Met-91 are necessary for PEX19 function on peroxisome biogenesis. A compositionally biased stretch (acidic residues) spans Arg-16 to Asp-27. Phosphoserine is present on residues Ser-35, Ser-54, and Ser-66. Residue Thr-236 is modified to Phosphothreonine. At Cys-296 the chain carries Cysteine methyl ester. Residue Cys-296 is the site of S-farnesyl cysteine attachment. The propeptide at Leu-297–Met-299 is removed in mature form.

Belongs to the peroxin-19 family. Interacts with a broad range of peroxisomal membrane proteins, including PEX3, PEX10, PEX11A, PEX11B, PEX12, PEX13, PEX14 and PEX16, PXMP2/PMP22, PXMP4/PMP24, SLC25A17/PMP34, ABCD1/ALDP, ABCD2/ALDRP, and ABCD3/PMP70. Also interacts with the tumor suppressor CDKN2A/p19ARF. As to quaternary structure, (Microbial infection) Interacts with human cytomegalovirus protein UL37 isoform vMIA; this interaction inhibits the peroxisomal-dependent antiviral signaling. In terms of tissue distribution, ubiquitously expressed. Isoform 1 is strongly predominant in all tissues except in utero where isoform 2 is the main form.

Its subcellular location is the cytoplasm. The protein localises to the peroxisome membrane. In terms of biological role, necessary for early peroxisomal biogenesis. Acts both as a cytosolic chaperone and as an import receptor for peroxisomal membrane proteins (PMPs). Binds and stabilizes newly synthesized PMPs in the cytoplasm by interacting with their hydrophobic membrane-spanning domains, and targets them to the peroxisome membrane by binding to the integral membrane protein PEX3. Excludes CDKN2A from the nucleus and prevents its interaction with MDM2, which results in active degradation of TP53. The polypeptide is Peroxisomal biogenesis factor 19 (Homo sapiens (Human)).